Consider the following 768-residue polypeptide: Solute carrier family 45 member 4 (768 aa).

The tract at residues 1–32 (MKMAPQNADPESMQVQELSVPLPDPQKAGGAE) is disordered. Helical transmembrane passes span 63–83 (EFCY…IGLP), 86–106 (YYSL…PLIG), 123–143 (ILAL…GSAI), 155–175 (PIGI…ADAT), 196–216 (LNIH…LGGL), and 233–253 (VLFF…LFSI). 2 disordered regions span residues 259 to 284 (SPQQ…PAFP) and 379 to 419 (NEAK…RHAF). Phosphoserine is present on residues Ser424 and Ser454. Residues 460 to 489 (DMQKRQRQHRHRNQSGATTSSGDTESEEGE) are disordered. Residues 473–482 (QSGATTSSGD) show a composition bias toward low complexity. Ser485 bears the Phosphoserine mark. Helical transmembrane passes span 518 to 538 (TWFS…QVIF), 560 to 580 (MGCW…ALLQ), 592 to 612 (VIYV…AMFP), 614 to 634 (VYVA…ISYC), 666 to 686 (ILSC…GGVV), and 695 to 715 (IPMV…FLVI). The interval 726–768 (EQKGLSSPLAGEGRAGGNSEKPTVLKLTRKEGLQGPVETESVV) is disordered. Residue Ser732 is modified to Phosphoserine.

It belongs to the glycoside-pentoside-hexuronide (GPH) cation symporter transporter (TC 2.A.2) family.

It localises to the membrane. The catalysed reaction is sucrose(out) + H(+)(out) = sucrose(in) + H(+)(in). In terms of biological role, proton-associated sucrose transporter. May be able to transport also glucose and fructose. The chain is Solute carrier family 45 member 4 from Homo sapiens (Human).